We begin with the raw amino-acid sequence, 133 residues long: Snaclec purpureotin subunit alpha (133 aa).

Cystine bridges form between Cys-2–Cys-13, Cys-30–Cys-127, and Cys-102–Cys-119. A C-type lectin domain is found at 9 to 128; it reads FKQYCYQIIK…CEQKHIFMCK (120 aa).

The protein belongs to the snaclec family. As to quaternary structure, homodimer (non-covalently linked) of heterodimer of alpha and beta subunits (disulfide-linked). Expressed by the venom gland.

The protein resides in the secreted. Its function is as follows. Snaclec that induces platelet aggregation without any cofactor in a dose-dependent manner. Its platelet aggregation effect is blocked by echicetin, suggesting it is a GPIb-binding protein which binds to the same or a closely related GPIb site on platelets as echicetin. The sequence is that of Snaclec purpureotin subunit alpha from Trimeresurus purpureomaculatus (Mangrove pit viper).